The following is a 166-amino-acid chain: Phosphopantetheine adenylyltransferase (166 aa).

Residue Ser9 coordinates substrate. Residues 9–10 (SF) and His17 each bind ATP. The substrate site is built by Lys41, Leu74, and Lys88. Residues 89-91 (GLR), Glu99, and 123-129 (YVHLSST) contribute to the ATP site.

This sequence belongs to the bacterial CoaD family. In terms of assembly, homohexamer. Mg(2+) serves as cofactor.

It is found in the cytoplasm. The enzyme catalyses (R)-4'-phosphopantetheine + ATP + H(+) = 3'-dephospho-CoA + diphosphate. It participates in cofactor biosynthesis; coenzyme A biosynthesis; CoA from (R)-pantothenate: step 4/5. In terms of biological role, reversibly transfers an adenylyl group from ATP to 4'-phosphopantetheine, yielding dephospho-CoA (dPCoA) and pyrophosphate. The chain is Phosphopantetheine adenylyltransferase from Paenarthrobacter aurescens (strain TC1).